Reading from the N-terminus, the 80-residue chain is Large ribosomal subunit protein bL31 (80 aa).

Zn(2+) contacts are provided by C16, C18, C38, and C41.

The protein belongs to the bacterial ribosomal protein bL31 family. Type A subfamily. In terms of assembly, part of the 50S ribosomal subunit. Zn(2+) serves as cofactor.

Functionally, binds the 23S rRNA. The polypeptide is Large ribosomal subunit protein bL31 (Rhodococcus jostii (strain RHA1)).